A 119-amino-acid chain; its full sequence is Large ribosomal subunit protein bL20c (119 aa).

This sequence belongs to the bacterial ribosomal protein bL20 family.

The protein localises to the plastid. It localises to the chloroplast. Functionally, binds directly to 23S ribosomal RNA and is necessary for the in vitro assembly process of the 50S ribosomal subunit. It is not involved in the protein synthesizing functions of that subunit. The chain is Large ribosomal subunit protein bL20c from Triticum aestivum (Wheat).